We begin with the raw amino-acid sequence, 114 residues long: T cell receptor beta variable 6-4 (114 aa).

The signal sequence occupies residues 1 to 21; it reads MSIRLLCCVAFSLLWAGPVTA. One can recognise an Ig-like domain in the interval 22-114; sequence GITQAPTSQI…TSVYFCASSD (93 aa). Cysteines 42 and 110 form a disulfide.

As to quaternary structure, alpha-beta TR is a heterodimer composed of an alpha and beta chain; disulfide-linked. The alpha-beta TR is associated with the transmembrane signaling CD3 coreceptor proteins to form the TR-CD3 (TcR or TCR). The assembly of alpha-beta TR heterodimers with CD3 occurs in the endoplasmic reticulum where a single alpha-beta TR heterodimer associates with one CD3D-CD3E heterodimer, one CD3G-CD3E heterodimer and one CD247 homodimer forming a stable octameric structure. CD3D-CD3E and CD3G-CD3E heterodimers preferentially associate with TR alpha and TR beta chains, respectively. The association of the CD247 homodimer is the last step of TcR assembly in the endoplasmic reticulum and is required for transport to the cell surface.

The protein resides in the cell membrane. In terms of biological role, v region of the variable domain of T cell receptor (TR) beta chain that participates in the antigen recognition. Alpha-beta T cell receptors are antigen specific receptors which are essential to the immune response and are present on the cell surface of T lymphocytes. Recognize peptide-major histocompatibility (MH) (pMH) complexes that are displayed by antigen presenting cells (APC), a prerequisite for efficient T cell adaptive immunity against pathogens. Binding of alpha-beta TR to pMH complex initiates TR-CD3 clustering on the cell surface and intracellular activation of LCK that phosphorylates the ITAM motifs of CD3G, CD3D, CD3E and CD247 enabling the recruitment of ZAP70. In turn ZAP70 phosphorylates LAT, which recruits numerous signaling molecules to form the LAT signalosome. The LAT signalosome propagates signal branching to three major signaling pathways, the calcium, the mitogen-activated protein kinase (MAPK) kinase and the nuclear factor NF-kappa-B (NF-kB) pathways, leading to the mobilization of transcription factors that are critical for gene expression and essential for T cell growth and differentiation. The T cell repertoire is generated in the thymus, by V-(D)-J rearrangement. This repertoire is then shaped by intrathymic selection events to generate a peripheral T cell pool of self-MH restricted, non-autoaggressive T cells. Post-thymic interaction of alpha-beta TR with the pMH complexes shapes TR structural and functional avidity. The protein is T cell receptor beta variable 6-4 of Homo sapiens (Human).